We begin with the raw amino-acid sequence, 351 residues long: Photosystem II D2 protein (351 aa).

The chain crosses the membrane as a helical span at residues 39 to 59; it reads CAYLAVGGWLTGTTFVTSWYT. His-116 provides a ligand contact to chlorophyll a. A helical membrane pass occupies residues 123 to 139; sequence GFCLRQFEIARLVGLRP. Gln-128 and Asn-141 together coordinate pheophytin a. Residues 151 to 164 traverse the membrane as a helical segment; sequence VFVSVFLMYPLGQA. Position 196 (His-196) interacts with chlorophyll a. The chain crosses the membrane as a helical span at residues 206–226; the sequence is GALLCAIHGATVQNTLFEDGD. The a plastoquinone site is built by His-213 and Phe-260. Residue His-213 participates in Fe cation binding. Residue His-267 participates in Fe cation binding. The chain crosses the membrane as a helical span at residues 277 to 293; that stretch reads GLWTSAFGIVGLALNLR.

Belongs to the reaction center PufL/M/PsbA/D family. PSII is composed of 1 copy each of membrane proteins PsbA, PsbB, PsbC, PsbD, PsbE, PsbF, PsbH, PsbI, PsbJ, PsbK, PsbL, PsbM, PsbT, PsbX, PsbY, PsbZ, Psb30/Ycf12, at least 3 peripheral proteins of the oxygen-evolving complex and a large number of cofactors. It forms dimeric complexes. It depends on The D1/D2 heterodimer binds P680, chlorophylls that are the primary electron donor of PSII, and subsequent electron acceptors. It shares a non-heme iron and each subunit binds pheophytin, quinone, additional chlorophylls, carotenoids and lipids. There is also a Cl(-1) ion associated with D1 and D2, which is required for oxygen evolution. The PSII complex binds additional chlorophylls, carotenoids and specific lipids. as a cofactor.

It localises to the plastid. The protein resides in the chloroplast thylakoid membrane. The catalysed reaction is 2 a plastoquinone + 4 hnu + 2 H2O = 2 a plastoquinol + O2. Functionally, photosystem II (PSII) is a light-driven water:plastoquinone oxidoreductase that uses light energy to abstract electrons from H(2)O, generating O(2) and a proton gradient subsequently used for ATP formation. It consists of a core antenna complex that captures photons, and an electron transfer chain that converts photonic excitation into a charge separation. The D1/D2 (PsbA/PsbD) reaction center heterodimer binds P680, the primary electron donor of PSII as well as several subsequent electron acceptors. D2 is needed for assembly of a stable PSII complex. This is Photosystem II D2 protein from Porphyra purpurea (Red seaweed).